The primary structure comprises 312 residues: Tetraacyldisaccharide 4'-kinase (312 aa).

Position 60–67 (60–67 (IAGGSGKT)) interacts with ATP.

This sequence belongs to the LpxK family.

The catalysed reaction is a lipid A disaccharide + ATP = a lipid IVA + ADP + H(+). The protein operates within glycolipid biosynthesis; lipid IV(A) biosynthesis; lipid IV(A) from (3R)-3-hydroxytetradecanoyl-[acyl-carrier-protein] and UDP-N-acetyl-alpha-D-glucosamine: step 6/6. Its function is as follows. Transfers the gamma-phosphate of ATP to the 4'-position of a tetraacyldisaccharide 1-phosphate intermediate (termed DS-1-P) to form tetraacyldisaccharide 1,4'-bis-phosphate (lipid IVA). This is Tetraacyldisaccharide 4'-kinase from Helicobacter pylori (strain ATCC 700392 / 26695) (Campylobacter pylori).